The primary structure comprises 393 residues: Heparan sulfate glucosamine 3-O-sulfotransferase 3A1 (393 aa).

Residues 1 to 24 (MAPSGPTGAQPSPAEPLSRSIFRK) lie on the Cytoplasmic side of the membrane. The helical; Signal-anchor for type II membrane protein transmembrane segment at 25–43 (FLLMLCSLLTSLYVFYCLA) threads the bilayer. Topologically, residues 44-393 (ERCPPGSGPV…MTGRDFGWDG (350 aa)) are lumenal. Residues 85 to 121 (QRRRRGRSGPGDSSDQEEQSPGLAAAPGGSGAGSSVA) form a disordered region. 3'-phosphoadenylyl sulfate is bound at residue 149-153 (KGGTR). Substrate contacts are provided by residues 171–177 (EPHFFDR) and 202–205 (KTPS). 3'-phosphoadenylyl sulfate is bound by residues Arg230 and Ser238. The N-linked (GlcNAc...) asparagine glycan is linked to Asn260. 270–271 (WS) is a substrate binding site. Asn331 is a glycosylation site (N-linked (GlcNAc...) asparagine). Cysteines 338 and 350 form a disulfide. 355–359 (KGRAH) contributes to the 3'-phosphoadenylyl sulfate binding site.

This sequence belongs to the sulfotransferase 1 family.

It localises to the golgi apparatus membrane. It carries out the reaction alpha-D-glucosaminyl-[heparan sulfate](n) + 3'-phosphoadenylyl sulfate = 3-sulfo-alpha-D-glucosaminyl-[heparan sulfate](n) + adenosine 3',5'-bisphosphate + H(+). Sulfotransferase that utilizes 3'-phospho-5'-adenylyl sulfate (PAPS) to catalyze the transfer of a sulfo group to an N-unsubstituted glucosamine linked to a 2-O-sulfo iduronic acid unit on heparan sulfate. Catalyzes the O-sulfation of glucosamine in IdoUA2S-GlcNS and also in IdoUA2S-GlcNH2. Unlike HS3ST1/3-OST-1, does not convert non-anticoagulant heparan sulfate to anticoagulant heparan sulfate. This Mus musculus (Mouse) protein is Heparan sulfate glucosamine 3-O-sulfotransferase 3A1 (Hs3st3a1).